Here is a 204-residue protein sequence, read N- to C-terminus: Venom allergen 5 (204 aa).

Cystine bridges form between Cys4–Cys17, Cys8–Cys101, Cys26–Cys94, and Cys170–Cys187. The region spanning 45–189 (LKEHNDFRQK…WHKHYLVCNY (145 aa)) is the SCP domain.

This sequence belongs to the CRISP family. Venom allergen 5-like subfamily. As to expression, expressed by the venom gland.

Its subcellular location is the secreted. In Vespula pensylvanica (Western yellow jacket), this protein is Venom allergen 5.